A 178-amino-acid chain; its full sequence is Cyclin-dependent kinase inhibitor 1B (178 aa).

A compositionally biased stretch (polar residues) spans 1 to 11 (MSNVRVSNGSP). Residues 1 to 31 (MSNVRVSNGSPSLERMDARQAEYPKPSACRN) form a disordered region. Serine 10 is subject to Phosphoserine; by UHMK1. Residues 51–91 (DMEEASQRKWNFDFQNHKPLEGKYEWQEVEKGSLPEFYYRP) form an interaction with CDK2 region. Residue tyrosine 74 is modified to Phosphotyrosine; by SRC. Residues 87–178 (FYYRPPRPPK…RTEENVSDGS (92 aa)) are disordered. Residue tyrosine 88 is modified to Phosphotyrosine; by ABL, LYN, SRC and JAK2. Tyrosine 89 is subject to Phosphotyrosine. Residues 104–113 (QESQDVSGTR) show a composition bias toward polar residues. Over residues 126 to 137 (EDTHLVDQKTDT) the composition is skewed to basic and acidic residues. A Nuclear localization signal motif is present at residues 153-169 (KRPATDDSSPQNKRANR). Threonine 157 bears the Phosphothreonine; by CaMK1, PKB/AKT1, RPS6KA1, RPS6KA3 and PIM1 mark. A Phosphothreonine modification is found at threonine 170.

It belongs to the CDI family. In terms of assembly, forms a ternary complex composed of CCNE1, CDK2 and CDKN1B. Interacts directly with CCNE1; the interaction is inhibited by CDK2-dependent phosphorylation. Interacts with COPS5, subunit of the COP9 signalosome complex; the interaction leads to CDKN1B degradation. Interacts with NUP50; the interaction leads to nuclear import and degradation of phosphorylated CDKN1B. Interacts with CCND1 and SNX6. Interacts (Thr-198-phosphorylated form) with 14-3-3 proteins, binds strongly YWHAQ, weakly YWHAE and YWHAH, but not YWHAB nor YWHAZ; the interaction with YWHAQ results in translocation to the cytoplasm. Interacts with AKT1 and LYN; the interactions lead to cytoplasmic mislocation, phosphorylation of CDKN1B and inhibition of cell cycle arrest. Forms a ternary complex with CCNA2 and CDK2; CDKN1B inhibits the kinase activity of CDK2 through conformational rearrangements. Interacts (unphosphorylated form) with CDK2. Forms a complex with CDK2 and SPDYA, but does not directly interact with SPDYA. Forms a ternary complex composed of cyclin D, CDK4 and CDKN1B. Interacts (phosphorylated on Tyr-88 and Tyr-89) with CDK4; the interaction is required for cyclin D and CDK4 complex assembly, induces nuclear translocation and activates the CDK4 kinase activity. Interacts with GRB2. Interacts with PIM1. Identified in a complex with SKP1, SKP2 and CKS1B. Interacts with UHMK1; the interaction leads to cytoplasmic mislocation, phosphorylation of CDKN1B and inhibition of cell cycle arrest. Also interacts with CDK1. Dephosphorylated by PPM1H, leading to CDKN1B stability. Post-translationally, phosphorylated; phosphorylation occurs on serine, threonine and tyrosine residues. Phosphorylation on Ser-10 is the major site of phosphorylation in resting cells, takes place at the G(0)-G(1) phase and leads to protein stability. Phosphorylation on other sites is greatly enhanced by mitogens, growth factors, MYC and in certain cancer cell lines. The phosphorylated form found in the cytoplasm is inactivate. Phosphorylation on Tyr-88 has no effect on binding CDK complexes. In terms of processing, ubiquitinated; in the cytoplasm by the KPC complex (composed of RNF123/KPC1 and UBAC1/KPC2) and, in the nucleus, by SCF(SKP2). The latter requires prior phosphorylation on Thr-187. Ubiquitinated; by a TRIM21-containing SCF(SKP2)-like complex; leads to its degradation. Subject to degradation in the lysosome. Interaction with SNX6 promotes lysosomal degradation.

Its subcellular location is the nucleus. The protein resides in the cytoplasm. The protein localises to the endosome. Its function is as follows. Important regulator of cell cycle progression. Inhibits the kinase activity of CDK2 bound to cyclin A, but has little inhibitory activity on CDK2 bound to SPDYA. Involved in G1 arrest. Potent inhibitor of cyclin E- and cyclin A-CDK2 complexes. Forms a complex with cyclin type D-CDK4 complexes and is involved in the assembly, stability, and modulation of CCND1-CDK4 complex activation. Acts either as an inhibitor or an activator of cyclin type D-CDK4 complexes depending on its phosphorylation state and/or stoichometry. In Neovison vison (American mink), this protein is Cyclin-dependent kinase inhibitor 1B (CDKN1B).